We begin with the raw amino-acid sequence, 622 residues long: Signal recognition particle subunit SRP68 (622 aa).

A disordered region spans residues 576–622 (RDATPKKAAKGSSAAAASSKTSNQEEEEQQGLTGMLSGWKKSFWGNK). Residues 585–595 (KGSSAAAASSK) are compositionally biased toward low complexity.

This sequence belongs to the SRP68 family. As to quaternary structure, heterodimer with srpa-72. Srpa-68/srpa-72 heterodimer formation is stabilized by the presence of 7SL RNA. Component of a signal recognition particle (SRP) complex that consists of a 7SL RNA molecule of 300 nucleotides and six protein subunits: srpa-72, srpa-68, SRP54, F37F2.2/SRP19, F25G6.8/SRP14 and ZK512.4/SRP9. Within the SRP complex, interacts (via C-terminus) with srpa-72 (via N-terminus).

The protein resides in the cytoplasm. It localises to the nucleus. Its subcellular location is the nucleolus. The protein localises to the endoplasmic reticulum. In terms of biological role, component of the signal recognition particle (SRP) complex, a ribonucleoprotein complex that mediates the cotranslational targeting of secretory and membrane proteins to the endoplasmic reticulum (ER). The SRP complex interacts with the signal sequence in nascent secretory and membrane proteins and directs them to the membrane of the ER. The SRP complex targets the ribosome-nascent chain complex to the SRP receptor (SR), which is anchored in the ER, where SR compaction and GTPase rearrangement drive cotranslational protein translocation into the ER. Binds the signal recognition particle RNA (7SL RNA), srpa-72 binds to this complex subsequently. The SRP complex possibly participates in the elongation arrest function. The polypeptide is Signal recognition particle subunit SRP68 (Caenorhabditis elegans).